Consider the following 227-residue polypeptide: 6-phosphogluconolactonase (227 aa).

This sequence belongs to the glucosamine/galactosamine-6-phosphate isomerase family. 6-phosphogluconolactonase subfamily.

It carries out the reaction 6-phospho-D-glucono-1,5-lactone + H2O = 6-phospho-D-gluconate + H(+). It functions in the pathway carbohydrate degradation; pentose phosphate pathway; D-ribulose 5-phosphate from D-glucose 6-phosphate (oxidative stage): step 2/3. Hydrolysis of 6-phosphogluconolactone to 6-phosphogluconate. The chain is 6-phosphogluconolactonase (pgl) from Helicobacter pylori (strain ATCC 700392 / 26695) (Campylobacter pylori).